The sequence spans 100 residues: Urease subunit gamma (100 aa).

This sequence belongs to the urease gamma subunit family. As to quaternary structure, heterotrimer of UreA (gamma), UreB (beta) and UreC (alpha) subunits. Three heterotrimers associate to form the active enzyme.

Its subcellular location is the cytoplasm. It catalyses the reaction urea + 2 H2O + H(+) = hydrogencarbonate + 2 NH4(+). The protein operates within nitrogen metabolism; urea degradation; CO(2) and NH(3) from urea (urease route): step 1/1. The chain is Urease subunit gamma from Delftia acidovorans (strain DSM 14801 / SPH-1).